Consider the following 253-residue polypeptide: Sulfate transporter CysZ (253 aa).

Transmembrane regions (helical) follow at residues 31–51 (FVIL…WWLF), 75–95 (LLWP…FSTI), 151–171 (IVLL…PVLW), and 222–242 (IPLL…AMWV).

It belongs to the CysZ family.

Its subcellular location is the cell inner membrane. In terms of biological role, high affinity, high specificity proton-dependent sulfate transporter, which mediates sulfate uptake. Provides the sulfur source for the cysteine synthesis pathway. The sequence is that of Sulfate transporter CysZ from Escherichia coli O139:H28 (strain E24377A / ETEC).